A 345-amino-acid chain; its full sequence is Dihydroorotate dehydrogenase (quinone) (345 aa).

FMN-binding positions include 65 to 69 (AGLDK) and Thr-89. Lys-69 serves as a coordination point for substrate. 114 to 118 (NRMGF) lines the substrate pocket. The FMN site is built by Asn-142 and Asn-175. Residue Asn-175 coordinates substrate. The active-site Nucleophile is the Ser-178. Substrate is bound at residue Asn-180. Positions 220 and 248 each coordinate FMN. Position 249–250 (249–250 (NT)) interacts with substrate. FMN is bound by residues Gly-271, Gly-300, and 321–322 (YT).

It belongs to the dihydroorotate dehydrogenase family. Type 2 subfamily. Monomer. FMN is required as a cofactor.

The protein resides in the cell membrane. It carries out the reaction (S)-dihydroorotate + a quinone = orotate + a quinol. It functions in the pathway pyrimidine metabolism; UMP biosynthesis via de novo pathway; orotate from (S)-dihydroorotate (quinone route): step 1/1. Its function is as follows. Catalyzes the conversion of dihydroorotate to orotate with quinone as electron acceptor. The polypeptide is Dihydroorotate dehydrogenase (quinone) (Burkholderia lata (strain ATCC 17760 / DSM 23089 / LMG 22485 / NCIMB 9086 / R18194 / 383)).